Here is a 409-residue protein sequence, read N- to C-terminus: Arginine deiminase (409 aa).

The active-site Amidino-cysteine intermediate is Cys-399.

This sequence belongs to the arginine deiminase family.

It localises to the cytoplasm. It carries out the reaction L-arginine + H2O = L-citrulline + NH4(+). Its pathway is amino-acid degradation; L-arginine degradation via ADI pathway; carbamoyl phosphate from L-arginine: step 1/2. The sequence is that of Arginine deiminase from Streptococcus pneumoniae (strain P1031).